A 548-amino-acid chain; its full sequence is ATP synthase subunit alpha (548 aa).

172–179 contributes to the ATP binding site; sequence GDRKTGKT.

Belongs to the ATPase alpha/beta chains family. F-type ATPases have 2 components, CF(1) - the catalytic core - and CF(0) - the membrane proton channel. CF(1) has five subunits: alpha(3), beta(3), gamma(1), delta(1), epsilon(1). CF(0) has three main subunits: a(1), b(2) and c(9-12). The alpha and beta chains form an alternating ring which encloses part of the gamma chain. CF(1) is attached to CF(0) by a central stalk formed by the gamma and epsilon chains, while a peripheral stalk is formed by the delta and b chains.

The protein localises to the cell membrane. It carries out the reaction ATP + H2O + 4 H(+)(in) = ADP + phosphate + 5 H(+)(out). In terms of biological role, produces ATP from ADP in the presence of a proton gradient across the membrane. The alpha chain is a regulatory subunit. This chain is ATP synthase subunit alpha, found in Mycolicibacterium smegmatis (strain ATCC 700084 / mc(2)155) (Mycobacterium smegmatis).